We begin with the raw amino-acid sequence, 263 residues long: MDNSWRLGPAIGLSAGQSQLLVSLLLLLTRVQPGTDVAAPEHISYVPQLSNDTLAGRLTLSTFTLEQPLGQFSSHNISDLDTIWLVVALSNATQSFTAPRTNQDIPAPANFSQRGYYLTLRANRVLYQTRGQLHVLRVGNDTHCQPTKIGCNHPLPGPGPYRVKFLVMNDEGPVAETKWSSDTRLQQAQALRAVPGPQSPGTVVIIAILSILLAVLLTVLLAVLIYTCFNSCRSTSLSGPEEAGSVRRYTTHLAFSTPAEGAS.

The N-terminal stretch at 1–33 (MDNSWRLGPAIGLSAGQSQLLVSLLLLLTRVQP) is a signal peptide. At 34–204 (GTDVAAPEHI…PGPQSPGTVV (171 aa)) the chain is on the extracellular side. N-linked (GlcNAc...) asparagine glycans are attached at residues Asn51, Asn76, and Asn91. Residues 205-225 (IIAILSILLAVLLTVLLAVLI) traverse the membrane as a helical segment. At 226 to 263 (YTCFNSCRSTSLSGPEEAGSVRRYTTHLAFSTPAEGAS) the chain is on the cytoplasmic side.

Belongs to the uroplakin-3 family.

Its subcellular location is the membrane. The chain is Uroplakin-3b-like protein 1 from Homo sapiens (Human).